The following is a 260-amino-acid chain: Methyl-coenzyme M reductase I subunit gamma (260 aa).

Arginine 123 is a binding site for coenzyme M.

It belongs to the methyl-coenzyme M reductase gamma subunit family. As to quaternary structure, MCR is a hexamer of two alpha, two beta, and two gamma chains, forming a dimer of heterotrimers. Coenzyme F430 serves as cofactor.

It is found in the cytoplasm. The catalysed reaction is coenzyme B + methyl-coenzyme M = methane + coenzyme M-coenzyme B heterodisulfide. It participates in one-carbon metabolism; methyl-coenzyme M reduction; methane from methyl-coenzyme M: step 1/1. Its function is as follows. Component of the methyl-coenzyme M reductase (MCR) I that catalyzes the reductive cleavage of methyl-coenzyme M (CoM-S-CH3 or 2-(methylthio)ethanesulfonate) using coenzyme B (CoB or 7-mercaptoheptanoylthreonine phosphate) as reductant which results in the production of methane and the mixed heterodisulfide of CoB and CoM (CoM-S-S-CoB). This is the final step in methanogenesis. The chain is Methyl-coenzyme M reductase I subunit gamma (mcrG) from Methanocaldococcus jannaschii (strain ATCC 43067 / DSM 2661 / JAL-1 / JCM 10045 / NBRC 100440) (Methanococcus jannaschii).